Here is a 509-residue protein sequence, read N- to C-terminus: Maturase K (509 aa).

The protein belongs to the intron maturase 2 family. MatK subfamily.

The protein localises to the plastid. It is found in the chloroplast. Functionally, usually encoded in the trnK tRNA gene intron. Probably assists in splicing its own and other chloroplast group II introns. The protein is Maturase K of Drimys granadensis.